Reading from the N-terminus, the 505-residue chain is Glutamate--cysteine ligase (505 aa).

It belongs to the glutamate--cysteine ligase type 1 family. Type 1 subfamily.

It catalyses the reaction L-cysteine + L-glutamate + ATP = gamma-L-glutamyl-L-cysteine + ADP + phosphate + H(+). The protein operates within sulfur metabolism; glutathione biosynthesis; glutathione from L-cysteine and L-glutamate: step 1/2. This Wigglesworthia glossinidia brevipalpis protein is Glutamate--cysteine ligase.